We begin with the raw amino-acid sequence, 156 residues long: Small ribosomal subunit protein uS7 (156 aa).

This sequence belongs to the universal ribosomal protein uS7 family. As to quaternary structure, part of the 30S ribosomal subunit. Contacts proteins S9 and S11.

Functionally, one of the primary rRNA binding proteins, it binds directly to 16S rRNA where it nucleates assembly of the head domain of the 30S subunit. Is located at the subunit interface close to the decoding center, probably blocks exit of the E-site tRNA. This is Small ribosomal subunit protein uS7 from Bradyrhizobium diazoefficiens (strain JCM 10833 / BCRC 13528 / IAM 13628 / NBRC 14792 / USDA 110).